Reading from the N-terminus, the 155-residue chain is Ribosome maturation factor RimP (155 aa).

It belongs to the RimP family.

The protein localises to the cytoplasm. Required for maturation of 30S ribosomal subunits. The protein is Ribosome maturation factor RimP of Deinococcus geothermalis (strain DSM 11300 / CIP 105573 / AG-3a).